The sequence spans 91 residues: Small ribosomal subunit protein bS16 (91 aa).

This sequence belongs to the bacterial ribosomal protein bS16 family.

The polypeptide is Small ribosomal subunit protein bS16 (Limosilactobacillus fermentum (strain NBRC 3956 / LMG 18251) (Lactobacillus fermentum)).